Consider the following 415-residue polypeptide: Dynein assembly factor with WD repeat domains 1 (415 aa).

8 WD repeats span residues 90–129 (AHIL…ELHT), 132–174 (GHKN…HTFR), 175–214 (GHTA…EVVT), 217–256 (GHLA…KVHT), 259–298 (GHCA…YVAT), 301–340 (GHDD…CVTK), 343–384 (GHEG…QVLE), and 386–415 (HTDE…RIWR).

The protein belongs to the WD repeat WDR69 family. As to quaternary structure, interacts with IFT46. In early mouse embryos, expression is limited to distal, motile ciliated cells of the node.

It is found in the cytoplasm. The protein resides in the cytoskeleton. Its subcellular location is the flagellum basal body. It localises to the flagellum axoneme. Functionally, required for axonemal dynein assembly and ciliary motility in ciliated organs, including Kupffer's vesicle, during embryogenesis. Facilitates the onset of robust cilia motility during development. This Mus musculus (Mouse) protein is Dynein assembly factor with WD repeat domains 1.